A 173-amino-acid polypeptide reads, in one-letter code: MSRRCTEVKRKSLPSNKYQSISAATSNQIMLASKLINKLTHHGNKELVEKMLDKIIQHIKHKYKADGFEVLESACNNVKPSLQVESLRIGGATYQVPSPVNELRSYTLAIKWIINSAANRTFEKSMWQKIAEELYEASNGRGGAVKKKDDNHKMAEANQAFSHLITKRRSRGN.

The protein belongs to the universal ribosomal protein uS7 family. Part of the 30S ribosomal subunit. Contacts proteins S9 and S11.

Functionally, one of the primary rRNA binding proteins, it binds directly to 16S rRNA where it nucleates assembly of the head domain of the 30S subunit. Is located at the subunit interface close to the decoding center, probably blocks exit of the E-site tRNA. This Orientia tsutsugamushi (strain Ikeda) (Rickettsia tsutsugamushi) protein is Small ribosomal subunit protein uS7.